The primary structure comprises 291 residues: Protease HtpX (291 aa).

Transmembrane regions (helical) follow at residues 4-24 and 32-52; these read IILF…ILSF and ISGL…ISLL. Position 139 (His139) interacts with Zn(2+). The active site involves Glu140. His143 provides a ligand contact to Zn(2+). 2 helical membrane passes run 158 to 178 and 192 to 212; these read IVNT…SSIL and WVYI…ASII. Residue Glu221 participates in Zn(2+) binding.

The protein belongs to the peptidase M48B family. The cofactor is Zn(2+).

It localises to the cell membrane. The polypeptide is Protease HtpX (Buchnera aphidicola subsp. Baizongia pistaciae (strain Bp)).